The following is a 212-amino-acid chain: Large ribosomal subunit protein uL3 (212 aa).

An N5-methylglutamine modification is found at Q153.

It belongs to the universal ribosomal protein uL3 family. Part of the 50S ribosomal subunit. Forms a cluster with proteins L14 and L19. Methylated by PrmB.

In terms of biological role, one of the primary rRNA binding proteins, it binds directly near the 3'-end of the 23S rRNA, where it nucleates assembly of the 50S subunit. The protein is Large ribosomal subunit protein uL3 of Colwellia psychrerythraea (strain 34H / ATCC BAA-681) (Vibrio psychroerythus).